The primary structure comprises 293 residues: 33 kDa chaperonin (293 aa).

2 cysteine pairs are disulfide-bonded: cysteine 238–cysteine 240 and cysteine 271–cysteine 274.

Belongs to the HSP33 family. In terms of processing, under oxidizing conditions two disulfide bonds are formed involving the reactive cysteines. Under reducing conditions zinc is bound to the reactive cysteines and the protein is inactive.

The protein resides in the cytoplasm. Functionally, redox regulated molecular chaperone. Protects both thermally unfolding and oxidatively damaged proteins from irreversible aggregation. Plays an important role in the bacterial defense system toward oxidative stress. The chain is 33 kDa chaperonin from Staphylococcus epidermidis (strain ATCC 35984 / DSM 28319 / BCRC 17069 / CCUG 31568 / BM 3577 / RP62A).